The chain runs to 169 residues: Crossover junction endodeoxyribonuclease RuvC (169 aa).

Active-site residues include Asp-12, Glu-72, and Asp-144. Mg(2+) contacts are provided by Asp-12, Glu-72, and Asp-144.

It belongs to the RuvC family. As to quaternary structure, homodimer which binds Holliday junction (HJ) DNA. The HJ becomes 2-fold symmetrical on binding to RuvC with unstacked arms; it has a different conformation from HJ DNA in complex with RuvA. In the full resolvosome a probable DNA-RuvA(4)-RuvB(12)-RuvC(2) complex forms which resolves the HJ. The cofactor is Mg(2+).

The protein localises to the cytoplasm. It carries out the reaction Endonucleolytic cleavage at a junction such as a reciprocal single-stranded crossover between two homologous DNA duplexes (Holliday junction).. The RuvA-RuvB-RuvC complex processes Holliday junction (HJ) DNA during genetic recombination and DNA repair. Endonuclease that resolves HJ intermediates. Cleaves cruciform DNA by making single-stranded nicks across the HJ at symmetrical positions within the homologous arms, yielding a 5'-phosphate and a 3'-hydroxyl group; requires a central core of homology in the junction. The consensus cleavage sequence is 5'-(A/T)TT(C/G)-3'. Cleavage occurs on the 3'-side of the TT dinucleotide at the point of strand exchange. HJ branch migration catalyzed by RuvA-RuvB allows RuvC to scan DNA until it finds its consensus sequence, where it cleaves and resolves the cruciform DNA. The protein is Crossover junction endodeoxyribonuclease RuvC of Xanthobacter autotrophicus (strain ATCC BAA-1158 / Py2).